Reading from the N-terminus, the 160-residue chain is Protein-export protein SecB (160 aa).

Belongs to the SecB family. Homotetramer, a dimer of dimers. One homotetramer interacts with 1 SecA dimer.

It localises to the cytoplasm. Functionally, one of the proteins required for the normal export of preproteins out of the cell cytoplasm. It is a molecular chaperone that binds to a subset of precursor proteins, maintaining them in a translocation-competent state. It also specifically binds to its receptor SecA. The protein is Protein-export protein SecB of Azorhizobium caulinodans (strain ATCC 43989 / DSM 5975 / JCM 20966 / LMG 6465 / NBRC 14845 / NCIMB 13405 / ORS 571).